Consider the following 269-residue polypeptide: Aquaporin-1 (269 aa).

Residues 1 to 11 (MASEFKKKLFW) lie on the Cytoplasmic side of the membrane. The helical transmembrane segment at 12 to 29 (RAVVAEFLAMTLFVFISI) threads the bilayer. Topologically, residues 30–46 (GSALGFKYPVGNNQTAV) are extracellular. N-linked (GlcNAc...) asparagine glycosylation occurs at N42. A helical membrane pass occupies residues 47-65 (QDNVKVSLAFGLSIATLAQ). Residues 66–68 (SVG) are Cytoplasmic-facing. The stretch at 69 to 82 (HISGAHLNPAVTLG) is an intramembrane region. The NPA 1 motif lies at 76 to 78 (NPA). Residues 83 to 90 (LLLSCQIS) lie on the Cytoplasmic side of the membrane. Residues 91-109 (IFRALMYIIAQCVGAIVAT) traverse the membrane as a helical segment. The Extracellular segment spans residues 110–133 (AILSGITSSLPGNSLGRNDLADGV). A helical transmembrane segment spans residues 134-153 (NSGQGLGIEIIGTLQLVLCV). Topologically, residues 154 to 163 (LATTDRRRRD) are cytoplasmic. The helical transmembrane segment at 164-181 (LGGSAPLAIGLSVALGHL) threads the bilayer. Residues 182 to 186 (LAIDY) lie on the Extracellular side of the membrane. An intramembrane segment occupies 187 to 199 (TGCGINPARSFGS). Positions 192–194 (NPA) match the NPA 2 motif. The Extracellular portion of the chain corresponds to 200–206 (AVITHNF). Residue N205 is glycosylated (N-linked (GlcNAc...) asparagine). A helical membrane pass occupies residues 207 to 224 (SNHWIFWVGPFIGGALAV). The Cytoplasmic segment spans residues 225-269 (LIYDFILAPRSSDFTDRVKVWTSGQVEEYDLDADDINSRVEMKPK). S247 carries the phosphoserine modification. Residue Y253 is modified to Phosphotyrosine. Position 262 is a phosphoserine (S262).

It belongs to the MIP/aquaporin (TC 1.A.8) family. Homotetramer; each monomer provides an independent water pore. Component of the ankyrin-1 complex in the erythrocyte, composed of ANK1, RHCE, RHAG, SLC4A1, EPB42, GYPA, GYPB and AQP1. Interacts with EPHB2; involved in endolymph production in the inner ear. Identified in a complex with STOM. Interacts (via the N-terminal) with ANK1 (via ANK 1-5 repeats). Interacts (via the C-terminal) with EPB42.

It is found in the cell membrane. It catalyses the reaction H2O(in) = H2O(out). The enzyme catalyses nitric oxide(out) = nitric oxide(in). It carries out the reaction CO2(out) = CO2(in). The catalysed reaction is glycerol(in) = glycerol(out). It catalyses the reaction H2O2(out) = H2O2(in). The enzyme catalyses K(+)(in) = K(+)(out). It carries out the reaction Na(+)(in) = Na(+)(out). Functionally, forms a water channel that facilitates the transport of water across cell membranes, playing a crucial role in water homeostasis in various tissues. Could also be permeable to small solutes including hydrogen peroxide, glycerol and gases such as amonnia (NH3), nitric oxide (NO) and carbon dioxide (CO2). Recruited to the ankyrin-1 complex, a multiprotein complex of the erythrocyte membrane, it could be part of a CO2 metabolon, linking facilitated diffusion of CO2 across the membrane, anion exchange of Cl(-)/HCO3(-) and interconversion of dissolved CO2 and carbonic acid in the cytosol. In vitro, it shows non-selective gated cation channel activity and may be permeable to cations like K(+) and Na(+) in vivo. This Pongo abelii (Sumatran orangutan) protein is Aquaporin-1.